The primary structure comprises 894 residues: Probable cytoplasmic aconitate hydratase (894 aa).

Residues Gln87 and 207–209 (DSH) each bind substrate. Residues Cys438, Cys504, and Cys507 each contribute to the [4Fe-4S] cluster site. Substrate is bound by residues Arg537, Arg542, and 781-782 (SR).

This sequence belongs to the aconitase/IPM isomerase family. Requires [4Fe-4S] cluster as cofactor.

The protein resides in the cytoplasm. Its subcellular location is the cytosol. It catalyses the reaction citrate = D-threo-isocitrate. In terms of biological role, catalyzes the isomerization of citrate to isocitrate via cis-aconitate. This chain is Probable cytoplasmic aconitate hydratase (aco1), found in Dictyostelium discoideum (Social amoeba).